The chain runs to 141 residues: MAKKVVGEIKLQIAATKANPSPPVGPALGQQGVNIMEFCKAFNERTKDMAGYNIPVVITVYADKSFTFITKQPPATDLIKKAAGITKGADNPLKNKVGQLTKAQILEIVDKKIVDMNTKDKEQAAKIISGSARSMGITVVD.

It belongs to the universal ribosomal protein uL11 family. In terms of assembly, part of the ribosomal stalk of the 50S ribosomal subunit. Interacts with L10 and the large rRNA to form the base of the stalk. L10 forms an elongated spine to which L12 dimers bind in a sequential fashion forming a multimeric L10(L12)X complex. One or more lysine residues are methylated.

Forms part of the ribosomal stalk which helps the ribosome interact with GTP-bound translation factors. The chain is Large ribosomal subunit protein uL11 from Campylobacter fetus subsp. fetus (strain 82-40).